The sequence spans 242 residues: MSPKYRRVLLKLSGEALMGNLNYGIDPKVVQSFASEIAQVVQAGVQTAIVVGGGNIFRGMKGAAAGMDRATADYIGMIATVMNAMTLQDALEQMNVPTRVQTAIAMQEVAEPYIRRRAIRHLEKGRVVIFGAGSGNPFFTTDTTAALRAAEIDAEVIFKATKVDGVYDADPHTHPNARRYRSLTYTHALTHNLAVMDSTAIALCKDNDIPIIVFSLETAGNIYRALTGEPIGTMVGGSCEIS.

Residue 11-14 coordinates ATP; the sequence is KLSG. Glycine 53 contacts UMP. 2 residues coordinate ATP: glycine 54 and arginine 58. UMP contacts are provided by residues aspartate 73 and 134–141; that span reads SGNPFFTT. Residues threonine 161, tyrosine 167, and aspartate 170 each contribute to the ATP site.

The protein belongs to the UMP kinase family. Homohexamer.

The protein localises to the cytoplasm. The catalysed reaction is UMP + ATP = UDP + ADP. It participates in pyrimidine metabolism; CTP biosynthesis via de novo pathway; UDP from UMP (UMPK route): step 1/1. Its activity is regulated as follows. Inhibited by UTP. Its function is as follows. Catalyzes the reversible phosphorylation of UMP to UDP. The sequence is that of Uridylate kinase from Thermosynechococcus vestitus (strain NIES-2133 / IAM M-273 / BP-1).